We begin with the raw amino-acid sequence, 111 residues long: Small ribosomal subunit protein uS10 (111 aa).

Belongs to the universal ribosomal protein uS10 family. As to quaternary structure, part of the 30S ribosomal subunit.

In terms of biological role, involved in the binding of tRNA to the ribosomes. In Protochlamydia amoebophila (strain UWE25), this protein is Small ribosomal subunit protein uS10.